Here is a 144-residue protein sequence, read N- to C-terminus: Small ribosomal subunit protein bS6 (144 aa).

The tract at residues 95–144 (PVTTPSPMMQDDKSKPDENSRGTAAPTVNVADDSASGAQVVAAEENDTQS) is disordered. Positions 104-114 (QDDKSKPDENS) are enriched in basic and acidic residues.

Belongs to the bacterial ribosomal protein bS6 family.

In terms of biological role, binds together with bS18 to 16S ribosomal RNA. This Nitrosomonas eutropha (strain DSM 101675 / C91 / Nm57) protein is Small ribosomal subunit protein bS6.